A 196-amino-acid chain; its full sequence is Imidazoleglycerol-phosphate dehydratase (196 aa).

This sequence belongs to the imidazoleglycerol-phosphate dehydratase family.

The protein localises to the cytoplasm. The catalysed reaction is D-erythro-1-(imidazol-4-yl)glycerol 3-phosphate = 3-(imidazol-4-yl)-2-oxopropyl phosphate + H2O. The protein operates within amino-acid biosynthesis; L-histidine biosynthesis; L-histidine from 5-phospho-alpha-D-ribose 1-diphosphate: step 6/9. In Dehalococcoides mccartyi (strain CBDB1), this protein is Imidazoleglycerol-phosphate dehydratase.